Consider the following 142-residue polypeptide: Large-conductance mechanosensitive channel (142 aa).

The next 3 helical transmembrane spans lie at 19 to 39 (VGII…ADLV), 41 to 61 (PFIA…ALDG), and 78 to 98 (FAFG…FVVF).

The protein belongs to the MscL family. As to quaternary structure, homopentamer.

Its subcellular location is the cell inner membrane. Functionally, channel that opens in response to stretch forces in the membrane lipid bilayer. May participate in the regulation of osmotic pressure changes within the cell. This Roseobacter denitrificans (strain ATCC 33942 / OCh 114) (Erythrobacter sp. (strain OCh 114)) protein is Large-conductance mechanosensitive channel.